Consider the following 265-residue polypeptide: MNDMRILERDVDAKAIKISARDVQVFYGDNHAIKDVNVEIQDKTVTAFIGPSGCGKSTFLRCLNRMNDTIDVCRVQGRITIDGEDIYDKRVDPVQLRAKVGMVFQKPNPFPKSIYDNVAYGPRIHGLAQNKAELDNLVENSLRRAALWGEVKDRLGAPGTGLSGGQQQRLCIARAVATQPEVLLMDEPCSALDPIATAQVEELIDDLRQNYSVVIVTHSMQQAARVSQKTAFFHLGNLVEYGETGTIFTNPEDPRTESYITGRIG.

An ABC transporter domain is found at Ile18–Ile260. Gly50 to Ser57 is a binding site for ATP.

It belongs to the ABC transporter superfamily. Phosphate importer (TC 3.A.1.7) family. As to quaternary structure, the complex is composed of two ATP-binding proteins (PstB), two transmembrane proteins (PstC and PstA) and a solute-binding protein (PstS).

It localises to the cell inner membrane. It catalyses the reaction phosphate(out) + ATP + H2O = ADP + 2 phosphate(in) + H(+). Part of the ABC transporter complex PstSACB involved in phosphate import. Responsible for energy coupling to the transport system. The polypeptide is Phosphate import ATP-binding protein PstB (Roseobacter denitrificans (strain ATCC 33942 / OCh 114) (Erythrobacter sp. (strain OCh 114))).